Reading from the N-terminus, the 58-residue chain is Large ribosomal subunit protein uL30 (58 aa).

Belongs to the universal ribosomal protein uL30 family. As to quaternary structure, part of the 50S ribosomal subunit.

The protein is Large ribosomal subunit protein uL30 of Azotobacter vinelandii (strain DJ / ATCC BAA-1303).